Here is a 457-residue protein sequence, read N- to C-terminus: Aromatic amino acid transport protein AroP (457 aa).

Over 1-19 (MMEGQQHGEQLKRGLKNRH) the chain is Cytoplasmic. A helical transmembrane segment spans residues 20-40 (IQLIALGGAIGTGLFLGSASV). Residues 41–42 (IQ) are Periplasmic-facing. A helical membrane pass occupies residues 43–63 (SAGPGIILGYAIAGFIAFLIM). Topologically, residues 64–86 (RQLGEMVVEEPVAGSFSHFAYKY) are cytoplasmic. A helical membrane pass occupies residues 87-107 (WGSFAGFASGWNYWVLYVLVA). Topologically, residues 108-117 (MAELTAVGKY) are periplasmic. A helical transmembrane segment spans residues 118–138 (IQFWYPEIPTWVSAAVFFVVI). Residues 139–155 (NAINLTNVTVFGEMEFW) are Cytoplasmic-facing. A helical membrane pass occupies residues 156–176 (FAIIKVIAVVAMIIFGGWLLF). Over 177 to 201 (SGNGGPQASVSNLWDQGGFLPHGFT) the chain is Periplasmic. A helical membrane pass occupies residues 202-222 (GLVMMMAIIMFSFGGLELVGI). The Cytoplasmic portion of the chain corresponds to 223 to 240 (TAAEADNPEQSIPKATNQ). A helical transmembrane segment spans residues 241-261 (VIYRILIFYIGSLAVLLSLMP). At 262 to 271 (WTRVTADTSP) the chain is on the periplasmic side. A helical membrane pass occupies residues 272-292 (FVLIFHELGDTFVANALNIVV). Over 293–333 (LTAALSVYNSCVYCNSRMLFGLAQQGNAPKALASVDKRGVP) the chain is Cytoplasmic. The helical transmembrane segment at 334–354 (VNTILVSALVTALCVLINYLA) threads the bilayer. Residues 355–358 (PESA) lie on the Periplasmic side of the membrane. Residues 359 to 379 (FGLLMALVVSALVINWAMISL) form a helical membrane-spanning segment. Topologically, residues 380 to 407 (AHMKFRRAKQEQGVVTRFPALLYPLGNW) are cytoplasmic. A helical transmembrane segment spans residues 408–428 (ICLLFMAVVLVIMLMTPGMAI). A topological domain (periplasmic) is located at residue Ser429. Residues 430-450 (VYLIPVWLVVLGIGYLFKEKT) traverse the membrane as a helical segment. The Cytoplasmic segment spans residues 451 to 457 (AKAVKAH).

Belongs to the amino acid-polyamine-organocation (APC) superfamily. Amino acid transporter (AAT) (TC 2.A.3.1) family.

It is found in the cell inner membrane. It catalyses the reaction L-phenylalanine(in) + H(+)(in) = L-phenylalanine(out) + H(+)(out). It carries out the reaction L-tryptophan(in) + H(+)(in) = L-tryptophan(out) + H(+)(out). The catalysed reaction is L-tyrosine(in) + H(+)(in) = L-tyrosine(out) + H(+)(out). Permease that is involved in the active transport across the cytoplasmic membrane of all three aromatic amino acids, phenylalanine, tyrosine and tryptophan. This Escherichia coli O157:H7 protein is Aromatic amino acid transport protein AroP (aroP).